The chain runs to 1254 residues: Structural polyprotein (1254 aa).

Residues 1 to 33 (MFPFQPMYPMQPMPYRNPFAAPRRPWFPRTDPF) form a necessary for nucleocapsid assembly and virus assembly region. A host transcription inhibition region spans residues 33–68 (FLAMQVQELTRSMANLTFKQRRGAPPEGPPAKKSKR). A Supraphysiological nuclear export signal motif is present at residues 41-48 (LTRSMANL). Asparagine 47 is a glycosylation site (N-linked (GlcNAc...) asparagine; by host). Residues 48 to 118 (LTFKQRRGAP…KKPGKRQRMV (71 aa)) are disordered. Positions 64 to 68 (KKSKR) match the Nuclear localization signal motif. Positions 76-91 (GGQRKKKKNEGKKKAK) are enriched in basic residues. The interval 90 to 126 (AKTGPPNLKTQNGNKKKTNKKPGKRQRMVMKLESDKT) is binding to the viral RNA. Phosphothreonine is present on residues threonine 92 and threonine 107. The span at 103–117 (NKKKTNKKPGKRQRM) shows a compositional bias: basic residues. A ribosome-binding region spans residues 111–125 (PGKRQRMVMKLESDK). Serine 123 bears the Phosphoserine mark. The Peptidase S3 domain maps to 125–274 (KTFPIMLEGK…KYTPENCEQW (150 aa)). Phosphothreonine is present on threonine 126. The active-site Charge relay system is histidine 151. Positions 167–172 (KKASKY) are interaction with spike glycoprotein E2. Catalysis depends on charge relay system residues aspartate 173 and serine 225. Residues 259–263 (EKGVT) are interaction with spike glycoprotein E2. Positions 275–286 (SLVTTMCLLANV) are functions as an uncleaved signal peptide for the precursor of protein E3/E2. The Extracellular portion of the chain corresponds to 275 to 702 (SLVTTMCLLA…YHRYPMSTIT (428 aa)). 7 disulfide bridges follow: cysteine 281-cysteine 290, cysteine 352-cysteine 456, cysteine 355-cysteine 360, cysteine 423-cysteine 437, cysteine 484-cysteine 599, cysteine 533-cysteine 559, and cysteine 535-cysteine 553. Residue asparagine 285 is glycosylated (N-linked (GlcNAc...) asparagine; by host). N-linked (GlcNAc...) asparagine; by host glycans are attached at residues asparagine 545 and asparagine 651. A helical transmembrane segment spans residues 703-723 (GLSICAAIVAVSIAASTWLLC). The tract at residues 724–728 (RSRAS) is interaction with the capsid protein. Residues 724 to 756 (RSRASCLTPYRLTPNAKMPLCLAVLCCARSARA) are Cytoplasmic-facing. S-palmitoyl cysteine; by host attachment occurs at residues cysteine 729, cysteine 749, and cysteine 750. Cysteine 729 and cysteine 750 are oxidised to a cystine. The segment at 735–754 (LTPNAKMPLCLAVLCCARSA) is transient transmembrane before p62-6K protein processing. Residues 757-768 (ETTWESLDHLWN) are Extracellular-facing. The chain crosses the membrane as a helical span at residues 769–789 (NNQQMFWTQLLIPLAALIVVT). A topological domain (cytoplasmic) is located at residue arginine 790. The chain crosses the membrane as a helical span at residues 791 to 811 (LLKCMCCVVPFLVVAGAAGAG). Residues 812–1224 (AYEHATTMPN…SKTAWTWLTS (413 aa)) are Extracellular-facing. 4 cysteine pairs are disulfide-bonded: cysteine 861/cysteine 926, cysteine 874/cysteine 906, cysteine 875/cysteine 908, and cysteine 880/cysteine 890. Residues 896 to 913 (VYPFMWGGAYCFCDTENT) form an E1 fusion peptide loop region. N-linked (GlcNAc...) asparagine; by host glycosylation is found at asparagine 946 and asparagine 1082. Disulfide bonds link cysteine 1071/cysteine 1083, cysteine 1113/cysteine 1188, cysteine 1118/cysteine 1192, and cysteine 1140/cysteine 1182. The helical transmembrane segment at 1225–1245 (LLGGSAVIIIIGLVLATLVAM) threads the bilayer. Residues 1246–1254 (YVLTNQKHN) are Cytoplasmic-facing.

Homodimer. Homomultimer. Interacts with host karyopherin KPNA4; this interaction allows the nuclear import of the viral capsid protein. Interacts with spike glycoprotein E2. Interacts with host IRAK1; the interaction leads to inhibition of IRAK1-dependent signaling. Part of a tetrameric complex composed of host CRM1, host importin alpha/beta dimer and the viral capsid; this complex blocks the receptor-mediated transport through the nuclear pore. Interacts with host phosphatase PPP1CA; this interaction dephosphorylates the capsid protein, which increases its ability to bind to the viral genome. In terms of assembly, the precursor of protein E3/E2 and E1 form a heterodimer shortly after synthesis. As to quaternary structure, interacts with spike glycoprotein E2. The precursor of protein E3/E2 and E1 form a heterodimer shortly after synthesis. Processing of the precursor of protein E3/E2 into E2 and E3 results in a heterodimer of the spike glycoproteins E2 and E1. Spike at virion surface are constituted of three E2-E1 heterodimers. After target cell attachment and endocytosis, E1 change conformation to form homotrimers. Interacts with 6K protein. Interacts with host LDLRAD3; this interaction mediates viral entry to the host cell. Interacts with spike glycoprotein E1. Processing of the precursor of protein E3/E2 into E2 and E3 results in a heterodimer of the spike glycoproteins E2 and E1. Spike at virion surface are constituted of a trimer of E2-E1 heterodimers. Interacts with 6K protein. Interacts with host LDLRAD3; this interaction mediates viral entry to the host cell. In terms of assembly, oligomer. Interacts with spike glycoprotein E1. Interacts with spike glycoprotein E2. Structural polyprotein: Specific enzymatic cleavages in vivo yield mature proteins. Capsid protein is auto-cleaved during polyprotein translation, unmasking a signal peptide at the N-terminus of the precursor of E3/E2. The remaining polyprotein is then targeted to the host endoplasmic reticulum, where host signal peptidase cleaves it into pE2, 6K and E1 proteins. pE2 is further processed to mature E3 and E2 by host furin in trans-Golgi vesicle. Post-translationally, phosphorylated on serine and threonine residues. In terms of processing, palmitoylated via thioester bonds. These palmitoylations may induce disruption of the C-terminus transmembrane. This would result in the reorientation of E2 C-terminus from lumenal to cytoplasmic side. N-glycosylated. Post-translationally, palmitoylated via thioester bonds.

The protein resides in the virion. The protein localises to the host cytoplasm. It localises to the host cell membrane. Its subcellular location is the host nucleus. It is found in the virion membrane. The protein resides in the host Golgi apparatus. The protein localises to the host trans-Golgi network. It localises to the host endoplasmic reticulum. It carries out the reaction Autocatalytic release of the core protein from the N-terminus of the togavirus structural polyprotein by hydrolysis of a -Trp-|-Ser- bond.. In terms of biological role, forms an icosahedral capsid with a T=4 symmetry composed of 240 copies of the capsid protein surrounded by a lipid membrane through which penetrate 80 spikes composed of trimers of E1-E2 heterodimers. The capsid protein binds to the viral RNA genome at a site adjacent to a ribosome binding site for viral genome translation following genome release. Possesses a protease activity that results in its autocatalytic cleavage from the nascent structural protein. Following its self-cleavage, the capsid protein transiently associates with ribosomes, and within several minutes the protein binds to viral RNA and rapidly assembles into icosahedric core particles. The resulting nucleocapsid eventually associates with the cytoplasmic domain of the spike glycoprotein E2 at the cell membrane, leading to budding and formation of mature virions. In case of infection, new virions attach to target cells and after clathrin-mediated endocytosis their membrane fuses with the host endosomal membrane. This leads to the release of the nucleocapsid into the cytoplasm, followed by an uncoating event necessary for the genomic RNA to become accessible. The uncoating might be triggered by the interaction of capsid proteins with ribosomes. Binding of ribosomes would release the genomic RNA since the same region is genomic RNA-binding and ribosome-binding. Specifically inhibits interleukin-1 receptor-associated kinase 1/IRAK1-dependent signaling during viral entry, representing a means by which the alphaviruses may evade innate immune detection and activation prior to viral gene expression. Inhibits host transcription. Forms a tetrameric complex with XPO1/CRM1 and the nuclear import receptor importin. This complex blocks the central channel of host nuclear pores thereby inhibiting the receptor-mediated nuclear transport and thus the host mRNA and rRNA transcription. The inhibition of transcription is linked to a cytopathic effect on the host cell. Provides the signal sequence for the translocation of the precursor of protein E3/E2 to the host endoplasmic reticulum. Furin-cleaved E3 remains associated with spike glycoprotein E1 and mediates pH protection of the latter during the transport via the secretory pathway. After virion release from the host cell, the assembly protein E3 is gradually released in the extracellular space. Its function is as follows. Plays a role in viral attachment to target host cell, by binding to the cell receptor LDLRAD3. Synthesized as a p62 precursor which is processed by furin at the cell membrane just before virion budding, giving rise to E2-E1 heterodimer. The p62-E1 heterodimer is stable, whereas E2-E1 is unstable and dissociate at low pH. p62 is processed at the last step, presumably to avoid E1 fusion activation before its final export to cell surface. E2 C-terminus contains a transitory transmembrane that would be disrupted by palmitoylation, resulting in reorientation of the C-terminal tail from lumenal to cytoplasmic side. This step is critical since E2 C-terminus is involved in budding by interacting with capsid proteins. This release of E2 C-terminus in cytoplasm occurs lately in protein export, and precludes premature assembly of particles at the endoplasmic reticulum membrane. Functionally, acts as a viroporin that participates in virus glycoprotein processing and transport to the plasma membrane, cell permeabilization and budding of viral particles. Disrupts the calcium homeostasis of the cell, probably at the endoplasmic reticulum level. This leads to cytoplasmic calcium elevation. Because of its lipophilic properties, the 6K protein is postulated to influence the selection of lipids that interact with the transmembrane domains of the glycoproteins, which, in turn, affects the deformability of the bilayer required for the extreme curvature that occurs as budding proceeds. Present in low amount in virions, about 3% compared to viral glycoproteins. In terms of biological role, class II viral fusion protein. Fusion activity is inactive as long as E1 is bound to E2 in mature virion. After virus attachment to cell receptor LDLRAD3 and endocytosis, acidification of the endosome induce dissociation of E1/E2 heterodimer and concomitant trimerization of the E1 subunits. This E1 trimer is fusion active, and promotes release of viral nucleocapsid in cytoplasm after endosome and viral membrane fusion. Efficient fusion requires the presence of cholesterol and sphingolipid in the target membrane. The chain is Structural polyprotein from Venezuelan equine encephalitis virus (strain Everglades Fe3-7c) (VEEV).